A 540-amino-acid chain; its full sequence is CTP synthase (540 aa).

An amidoligase domain region spans residues 1–264 (MQYIVVTGGV…ISYLSKLSGK (264 aa)). Ser12 contacts CTP. UTP is bound at residue Ser12. 13–18 (GLGKGT) is an ATP binding site. Tyr53 is a binding site for L-glutamine. Asp70 contacts ATP. Residues Asp70 and Glu140 each contribute to the Mg(2+) site. CTP contacts are provided by residues 147–149 (DIE), 185–190 (KTKPTQ), and Arg221. Residues 185 to 190 (KTKPTQ) and Arg221 each bind UTP. One can recognise a Glutamine amidotransferase type-1 domain in the interval 294–527 (YVDLHDAYIS…VQQALIYKKN (234 aa)). Residue Gly347 coordinates L-glutamine. Cys374 serves as the catalytic Nucleophile; for glutamine hydrolysis. L-glutamine contacts are provided by residues 375–378 (LGFQ), Glu398, and Arg455. Active-site residues include His500 and Glu502.

The protein belongs to the CTP synthase family. In terms of assembly, homotetramer.

It carries out the reaction UTP + L-glutamine + ATP + H2O = CTP + L-glutamate + ADP + phosphate + 2 H(+). It catalyses the reaction L-glutamine + H2O = L-glutamate + NH4(+). The catalysed reaction is UTP + NH4(+) + ATP = CTP + ADP + phosphate + 2 H(+). The protein operates within pyrimidine metabolism; CTP biosynthesis via de novo pathway; CTP from UDP: step 2/2. Its activity is regulated as follows. Allosterically activated by GTP, when glutamine is the substrate; GTP has no effect on the reaction when ammonia is the substrate. The allosteric effector GTP functions by stabilizing the protein conformation that binds the tetrahedral intermediate(s) formed during glutamine hydrolysis. Inhibited by the product CTP, via allosteric rather than competitive inhibition. Its function is as follows. Catalyzes the ATP-dependent amination of UTP to CTP with either L-glutamine or ammonia as the source of nitrogen. Regulates intracellular CTP levels through interactions with the four ribonucleotide triphosphates. The protein is CTP synthase of Thermoplasma volcanium (strain ATCC 51530 / DSM 4299 / JCM 9571 / NBRC 15438 / GSS1).